The following is a 393-amino-acid chain: MTEITNAIERTVEGTDLPKRLKDEVYESIEGRDVTDEQAVSIAEAVESRYLDTRVEPLDPVGTVSAQSIGEPGTQMTMNTFHYAGVAEIDVTQGLPRLIELVDARKTPDTPMMTVYLDDQHAENREKAHEVVWNIESTRILALGDVSTNVADMLVQVNLNEQTLDERMISAETVAEIIEDSLGVEVTQTGTTIEFGPAEPSYRRLLQLVEELREIVFKGIEEVSRVVIRKEDVDDGEEFILYTEGSAFGDVLDIEGVDASRTTCNNIHEVYRNLGVEAARETIIDETMNTLEEQGLGDVNIRHLMLVADIMTAEGTIESIGRHGISGNKNSVLARAAFEVTVNHLLDAAVHGEVDDLDGVTENVIVGKPIKLGTGDVNLRMGGATTDGSGRAD.

It belongs to the RNA polymerase beta' chain family. In terms of assembly, part of the RNA polymerase complex.

The protein localises to the cytoplasm. It carries out the reaction RNA(n) + a ribonucleoside 5'-triphosphate = RNA(n+1) + diphosphate. DNA-dependent RNA polymerase (RNAP) catalyzes the transcription of DNA into RNA using the four ribonucleoside triphosphates as substrates. Forms part of the jaw domain. This Halococcus morrhuae (Micrococcus morrhuae) protein is DNA-directed RNA polymerase subunit Rpo1C.